The following is a 192-amino-acid chain: Protein GrpE (192 aa).

The segment at 1 to 34 is disordered; the sequence is MSSKEQKTPNEQVSEEMENTAEQQVEATQETGEC. Residues 20–31 show a composition bias toward polar residues; the sequence is TAEQQVEATQET.

The protein belongs to the GrpE family. Homodimer.

It is found in the cytoplasm. Its function is as follows. Participates actively in the response to hyperosmotic and heat shock by preventing the aggregation of stress-denatured proteins, in association with DnaK and GrpE. It is the nucleotide exchange factor for DnaK and may function as a thermosensor. Unfolded proteins bind initially to DnaJ; upon interaction with the DnaJ-bound protein, DnaK hydrolyzes its bound ATP, resulting in the formation of a stable complex. GrpE releases ADP from DnaK; ATP binding to DnaK triggers the release of the substrate protein, thus completing the reaction cycle. Several rounds of ATP-dependent interactions between DnaJ, DnaK and GrpE are required for fully efficient folding. The sequence is that of Protein GrpE from Yersinia pestis.